Consider the following 170-residue polypeptide: Histone H1.9 (170 aa).

An H15 domain is found at 34–108 (RKPTMSYVIL…GASGSLCLCK (75 aa)). Position 56 is a phosphoserine (Ser-56). Residues 118–140 (AKRCQDRQKSQKPQKPGQRESEP) are disordered.

It belongs to the histone H1/H5 family. In terms of tissue distribution, expressed exclusively in the testis by haploid germ cells (at protein level).

It is found in the nucleus. The protein resides in the chromosome. Its function is as follows. DNA-binding protein that may be implicated in chromatin remodeling and/or transcriptional regulation during spermiogenesis, the process of spermatid maturation into spermatozoa. This chain is Histone H1.9, found in Mus musculus (Mouse).